Consider the following 61-residue polypeptide: Large ribosomal subunit protein bL32 (61 aa).

Residues Met1–Val22 form a disordered region. A compositionally biased stretch (basic residues) spans Lys7–Gln20.

The protein belongs to the bacterial ribosomal protein bL32 family.

In Desulforapulum autotrophicum (strain ATCC 43914 / DSM 3382 / VKM B-1955 / HRM2) (Desulfobacterium autotrophicum), this protein is Large ribosomal subunit protein bL32.